A 212-amino-acid polypeptide reads, in one-letter code: uncharacterized protein (212 aa).

S-adenosyl-L-methionine contacts are provided by Gly53, Glu74, and Asp97.

This sequence belongs to the methyltransferase superfamily. YrrT family.

Could be a S-adenosyl-L-methionine-dependent methyltransferase. This is an uncharacterized protein from Bacillus thuringiensis (strain Al Hakam).